Consider the following 147-residue polypeptide: Large ribosomal subunit protein uL15 (147 aa).

Over residues 1 to 13 (MELHSLKAAEGSR) the composition is skewed to basic and acidic residues. Residues 1–57 (MELHSLKAAEGSRKVRNRVGRGTSSGNGKTSGRGQKGQKSRSGGGVRPGFEGGQTEL) are disordered. Gly residues-rich tracts occupy residues 23–35 (TSSG…GRGQ) and 42–52 (SGGGVRPGFEG).

The protein belongs to the universal ribosomal protein uL15 family. In terms of assembly, part of the 50S ribosomal subunit.

Functionally, binds to the 23S rRNA. The polypeptide is Large ribosomal subunit protein uL15 (Lactococcus lactis subsp. lactis (strain IL1403) (Streptococcus lactis)).